Reading from the N-terminus, the 60-residue chain is Cytotoxin 1 (60 aa).

4 disulfide bridges follow: Cys3/Cys21, Cys14/Cys38, Cys42/Cys53, and Cys54/Cys59.

The protein belongs to the three-finger toxin family. Short-chain subfamily. Type IA cytotoxin sub-subfamily. In terms of assembly, monomer in solution; Homodimer and oligomer in the presence of negatively charged lipids forming a pore with a size ranging between 20 and 30 Angstroms. As to expression, expressed by the venom gland.

It is found in the secreted. It localises to the target cell membrane. Functionally, shows cytolytic activity on many different cells by forming pore in lipid membranes. In vivo, increases heart rate or kills the animal by cardiac arrest. In addition, it binds to heparin with high affinity, interacts with Kv channel-interacting protein 1 (KCNIP1) in a calcium-independent manner, and binds to integrin alpha-V/beta-3 (ITGAV/ITGB3) with moderate affinity. The sequence is that of Cytotoxin 1 from Naja mossambica (Mozambique spitting cobra).